A 165-amino-acid chain; its full sequence is DELTA-actitoxin-Oor1a (165 aa).

The tract at residues 1–17 is N-terminal region; the sequence is ATFRVLAKVLAELGKVS. Phosphocholine is bound by residues Ser-41, Val-74, Ser-92, Pro-94, and Tyr-125. The tract at residues 92–107 is trp-rich region, which is important for the binding to lipid membrane; that stretch reads SVPYDYNLYSNWWNVK.

It belongs to the actinoporin family. Sea anemone subfamily. Octamer or nonamer in membranes. Monomer in the soluble state.

It is found in the secreted. The protein localises to the nematocyst. The protein resides in the target cell membrane. In terms of biological role, pore-forming protein that forms cations-selective hydrophilic pores of around 1 nm and causes cardiac stimulation and cytolysis. Pore formation is a multi-step process that involves specific recognition of membrane sphingomyelin (but neither cholesterol nor phosphatidylcholine) using aromatic rich region and adjacent phosphocholine (POC) binding site, firm binding to the membrane (mainly driven by hydrophobic interactions) accompanied by the transfer of the N-terminal region to the lipid-water interface and finally pore formation after oligomerization of monomers. Cytolytic effects include red blood cells hemolysis, platelet aggregation and lysis, cytotoxic and cytostatic effects on fibroblasts. Lethality in mammals has been ascribed to severe vasospasm of coronary vessels, cardiac arrhythmia, and inotropic effects. In Oulactis orientalis (Japan anemone), this protein is DELTA-actitoxin-Oor1a.